Consider the following 676-residue polypeptide: Transcription factor RLM1 (676 aa).

Residues 3 to 57 form the MADS-box domain; sequence RRKIEIQRISDDRNRAVTFIKRKAGLFKKAHELSVLCQVDIAVIILGSNNTFYEF. The mef2-type DNA-binding region spans 58-87; that stretch reads SSVDTNDLIYHYQNDKNLLHEVKDPSDYGD. Residues 103–120 are compositionally biased toward polar residues; the sequence is SSMSNKPSKSNVKGMNQS. Residues 103-156 are disordered; the sequence is SSMSNKPSKSNVKGMNQSENDDDENNDEDDDDHGNFERNSNMHSNKKASDKNIP. At Ser-120 the chain carries Phosphoserine. A compositionally biased stretch (acidic residues) spans 121 to 134; sequence ENDDDENNDEDDDD. Phosphoserine is present on Ser-164. Residues 173 to 183 are compositionally biased toward basic and acidic residues; the sequence is DGSEQNKRHPE. 5 disordered regions span residues 173–192, 202–318, 330–424, 472–514, and 532–631; these read DGSE…LQHL, ISRT…RRKL, NNNF…PFGS, KKQS…VHDL, and MGPN…NSST. Over residues 260–276 the composition is skewed to polar residues; that stretch reads ISPNKFSKPFTNASSRT. Residues 284 to 295 show a composition bias toward low complexity; the sequence is NNSGSNNNDNSN. Over residues 296–312 the composition is skewed to polar residues; that stretch reads YTQSPSNSLEDSIQQTV. Composition is skewed to low complexity over residues 334-359, 368-381, and 399-417; these read SSNS…MGSS, SRSS…ASAS, and PNAN…NNNN. Residues Ser-374 and Ser-377 each carry the phosphoserine modification. Residues 472 to 506 are compositionally biased toward polar residues; sequence KKQSQTVPLTTTLTGRPPSTFSGPETSNGPPTGSL. Residues 539-604 are compositionally biased toward low complexity; sequence PGNTNNPGTF…NSNNSYYSNN (66 aa). Residues 621-631 show a composition bias toward polar residues; that stretch reads GDSNNQSNSST.

The protein belongs to the MEF2 family. As to quaternary structure, can heterodimerize with SPM1. Interacts with KDX1 and SLT2. In terms of processing, phosphorylated by SLT2.

It localises to the nucleus. Its function is as follows. May function as a transcription factor downstream of MPK1 that is subject to activation by the MPK1 mitogen-activated protein kinase pathway. Binds to the DNA sequence 5'-CTA[TA](4)TAG-3'. At least some RML1 target genes are involved in cell wall biosynthesis. In Saccharomyces cerevisiae (strain ATCC 204508 / S288c) (Baker's yeast), this protein is Transcription factor RLM1 (RLM1).